A 317-amino-acid polypeptide reads, in one-letter code: MASLKVPSNVPLPEDDAEQLHKAFSGWGTNEKLIISILAHRNAAQRSLIRSVYAATYNEDLLKALDKELSSDFERAVMLWTLDPPERDAYLAKESTKMFTKNNWVLVEIACTRPALELIKVKQAYQARYKKSIEEDVAQHTSGDLRKLLLPLVSTFRYEGDDVNMMLARSEAKILHEKVSEKSYSDDDFIRILTTRSKAQLGATLNHYNNEYGNAINKNLKEESDDNDYMKLLRAVITCLTYPEKHFEKVLRLSINKMGTDEWGLTRVVTTRTEVDMERIKEEYQRRNSIPLDRAIAKDTSGDYEDMLVALLGHGDA.

An N-acetylalanine modification is found at Ala-2. Annexin repeat units follow at residues 11 to 82 (PLPE…LWTL), 83 to 154 (DPPE…PLVS), 166 to 238 (MLAR…AVIT), and 242 to 313 (YPEK…ALLG). Phe-24, Gly-26, Gly-28, and Glu-68 together coordinate Ca(2+). Ser-95 is modified (phosphoserine). Phosphothreonine is present on residues Thr-100 and Thr-112. Tyr-129 carries the phosphotyrosine modification. 2 residues coordinate Ca(2+): Ile-255 and Gly-259. Residue Tyr-284 is modified to Phosphotyrosine. A Phosphoserine modification is found at Ser-289. Ca(2+)-binding residues include Asp-299, Thr-300, and Glu-305.

Belongs to the annexin (TC 1.A.31.1) family. In terms of tissue distribution, expressed mainly in roots and flowers. Low in stems and bearly detectable in leaves.

It is found in the cytoplasm. The protein localises to the cytosol. The protein resides in the membrane. Functionally, may mediate regulated, targeted secretion of Golgi-derived vesicles during seedling development. This is Annexin D2 (ANN2) from Arabidopsis thaliana (Mouse-ear cress).